The sequence spans 103 residues: Large ribosomal subunit protein bL21 (103 aa).

The protein belongs to the bacterial ribosomal protein bL21 family. Part of the 50S ribosomal subunit. Contacts protein L20.

Its function is as follows. This protein binds to 23S rRNA in the presence of protein L20. This is Large ribosomal subunit protein bL21 from Psychromonas ingrahamii (strain DSM 17664 / CCUG 51855 / 37).